Reading from the N-terminus, the 645-residue chain is UPF0313 protein CLM_0251 (645 aa).

The region spanning 295–566 (AIKEVKFSIT…RMQRALLQFS (272 aa)) is the Radical SAM core domain. [4Fe-4S] cluster contacts are provided by Cys309, Cys313, and Cys316. Residues 598–645 (NKPYKKSHKKNNAKNNNNHYNKNNNYNKNKDISKKNKKNSLSKHKKRK) are disordered. Residues 600–609 (PYKKSHKKNN) are compositionally biased toward basic residues. Over residues 610–624 (AKNNNNHYNKNNNYN) the composition is skewed to low complexity. The segment covering 632–645 (KNKKNSLSKHKKRK) has biased composition (basic residues).

Belongs to the UPF0313 family. [4Fe-4S] cluster serves as cofactor.

The chain is UPF0313 protein CLM_0251 from Clostridium botulinum (strain Kyoto / Type A2).